Reading from the N-terminus, the 265-residue chain is Mlc titration factor A (265 aa).

Residues His111, His148, His152, and Glu211 each contribute to the Zn(2+) site.

This sequence belongs to the MtfA family. In terms of assembly, interacts with Mlc. The cofactor is Zn(2+).

Its subcellular location is the cytoplasm. Involved in the modulation of the activity of the glucose-phosphotransferase system (glucose-PTS). Interacts with the transcriptional repressor Mlc, preventing its interaction with DNA and leading to the modulation of expression of genes regulated by Mlc, including ptsG, which encodes the PTS system glucose-specific EIICB component. Its function is as follows. Shows zinc-dependent metallopeptidase activity. This is Mlc titration factor A from Escherichia coli O127:H6 (strain E2348/69 / EPEC).